The sequence spans 489 residues: Cobyric acid synthase (489 aa).

The GATase cobBQ-type domain occupies 252–441; it reads ALTIGVIQLP…IHGIFANTEF (190 aa). Cysteine 330 functions as the Nucleophile in the catalytic mechanism. Residue histidine 433 is part of the active site.

This sequence belongs to the CobB/CobQ family. CobQ subfamily.

It functions in the pathway cofactor biosynthesis; adenosylcobalamin biosynthesis. In terms of biological role, catalyzes amidations at positions B, D, E, and G on adenosylcobyrinic A,C-diamide. NH(2) groups are provided by glutamine, and one molecule of ATP is hydrogenolyzed for each amidation. The protein is Cobyric acid synthase of Herpetosiphon aurantiacus (strain ATCC 23779 / DSM 785 / 114-95).